Here is a 191-residue protein sequence, read N- to C-terminus: Ribosomal RNA large subunit methyltransferase E (191 aa).

The S-adenosyl-L-methionine site is built by glycine 49, tryptophan 51, aspartate 66, aspartate 82, and aspartate 105. Residue lysine 145 is the Proton acceptor of the active site.

This sequence belongs to the class I-like SAM-binding methyltransferase superfamily. RNA methyltransferase RlmE family.

Its subcellular location is the cytoplasm. The catalysed reaction is uridine(2552) in 23S rRNA + S-adenosyl-L-methionine = 2'-O-methyluridine(2552) in 23S rRNA + S-adenosyl-L-homocysteine + H(+). In terms of biological role, specifically methylates the uridine in position 2552 of 23S rRNA at the 2'-O position of the ribose in the fully assembled 50S ribosomal subunit. This Archaeoglobus fulgidus (strain ATCC 49558 / DSM 4304 / JCM 9628 / NBRC 100126 / VC-16) protein is Ribosomal RNA large subunit methyltransferase E.